The chain runs to 458 residues: MSLFRSRQAKIHFVGVGGIGMSGIAEVLLNLGYTVSGSDLRESETTRRLAGLGGHISYGHAAENVLQVDVVVISSAVKRDNPEVLEARRRKIPVIPRAEMLAELMRLKYGVAIAGSHGKTTTTSMAAHLLAHAGLDPTAVVGGKVNAFGSNAKLGKGDYMVVEADESDGSFLRIPPTIAIVTNIDPEHLDHWKTPDALRRGFVDFVNRVPFYGLAILCIDHPTVQSILPDVEKRVVTYGESHQADYRAEAIELSGHAVRFDAFRRDEALGRFEVAMVGRHNALNALAVIALGDEMGIPPLVTREALRSFQGVQRRFTVRGEVAGVTVVDDYGHHPAEVKATLQGAREAFKRRVVCLFQPHRYTRTRDLMAEFATAFNDADVLLLTDIYAAGEEPIPGATAANLAEAIRAWGHRDVTVVPRAELARAARERIRPGDLVLTLGAGDVTAAGPELLALLER.

Residue 115–121 participates in ATP binding; that stretch reads GSHGKTT.

Belongs to the MurCDEF family.

The protein localises to the cytoplasm. The enzyme catalyses UDP-N-acetyl-alpha-D-muramate + L-alanine + ATP = UDP-N-acetyl-alpha-D-muramoyl-L-alanine + ADP + phosphate + H(+). The protein operates within cell wall biogenesis; peptidoglycan biosynthesis. Cell wall formation. This chain is UDP-N-acetylmuramate--L-alanine ligase, found in Anaeromyxobacter dehalogenans (strain 2CP-C).